A 348-amino-acid polypeptide reads, in one-letter code: Dihydroorotase (348 aa).

Histidine 17 and histidine 19 together coordinate Zn(2+). Residues 19 to 21 (HLR) and asparagine 45 contribute to the substrate site. 3 residues coordinate Zn(2+): lysine 103, histidine 140, and histidine 178. Lysine 103 is modified (N6-carboxylysine). Histidine 140 contacts substrate. Residue leucine 223 participates in substrate binding. Aspartate 251 serves as a coordination point for Zn(2+). The active site involves aspartate 251. Substrate is bound by residues histidine 255 and alanine 267.

It belongs to the metallo-dependent hydrolases superfamily. DHOase family. Class II DHOase subfamily. Homodimer. The cofactor is Zn(2+).

It catalyses the reaction (S)-dihydroorotate + H2O = N-carbamoyl-L-aspartate + H(+). The protein operates within pyrimidine metabolism; UMP biosynthesis via de novo pathway; (S)-dihydroorotate from bicarbonate: step 3/3. In terms of biological role, catalyzes the reversible cyclization of carbamoyl aspartate to dihydroorotate. This Shigella dysenteriae serotype 1 (strain Sd197) protein is Dihydroorotase.